Consider the following 413-residue polypeptide: BEN domain-containing protein 7 (413 aa).

Glycyl lysine isopeptide (Lys-Gly) (interchain with G-Cter in SUMO2) cross-links involve residues lysine 16, lysine 56, and lysine 85. Positions 78–88 (GKEGEKLKEEP) are enriched in basic and acidic residues. Disordered stretches follow at residues 78 to 153 (GKEG…GELP) and 208 to 243 (RTAV…MEKK). Composition is skewed to polar residues over residues 99-111 (LNSS…SLHP) and 121-153 (PPQS…GELP). Residues 211–222 (VSRKRNKKKKVP) show a composition bias toward basic residues. A compositionally biased stretch (low complexity) spans 223–232 (PKTVEPLTVK). Residue lysine 243 forms a Glycyl lysine isopeptide (Lys-Gly) (interchain with G-Cter in SUMO2) linkage. The BEN domain maps to 287–392 (GFDVFMPKSQ…IKLARRRLKR (106 aa)). Threonine 324 is modified (phosphothreonine). Serine 328 carries the post-translational modification Phosphoserine.

The polypeptide is BEN domain-containing protein 7 (BEND7) (Homo sapiens (Human)).